The sequence spans 938 residues: Protein translocase subunit SecA (938 aa).

ATP-binding positions include glutamine 90, 108–112 (GEGKT), and aspartate 504.

Belongs to the SecA family. As to quaternary structure, monomer and homodimer. Part of the essential Sec protein translocation apparatus which comprises SecA, SecYEG and auxiliary proteins SecDF. Other proteins may also be involved.

Its subcellular location is the cell inner membrane. The protein resides in the cellular thylakoid membrane. The protein localises to the cytoplasm. The enzyme catalyses ATP + H2O + cellular proteinSide 1 = ADP + phosphate + cellular proteinSide 2.. Functionally, part of the Sec protein translocase complex. Interacts with the SecYEG preprotein conducting channel. Has a central role in coupling the hydrolysis of ATP to the transfer of proteins into and across the cell membrane, serving as an ATP-driven molecular motor driving the stepwise translocation of polypeptide chains across the membrane. Its function is as follows. Probably participates in protein translocation into and across both the cytoplasmic and thylakoid membranes in cyanobacterial cells. The protein is Protein translocase subunit SecA of Microcystis aeruginosa (strain NIES-843 / IAM M-2473).